Consider the following 717-residue polypeptide: DNA ligase (717 aa).

NAD(+) contacts are provided by residues 41–45 (DARYD), 90–91 (SL), and Glu-124. Lys-126 acts as the N6-AMP-lysine intermediate in catalysis. NAD(+) contacts are provided by Arg-147, Glu-183, Lys-299, and Lys-323. Cys-428, Cys-431, Cys-446, and Cys-452 together coordinate Zn(2+). The BRCT domain occupies 636–717 (ADYSPVAGKT…WLQLINEHHI (82 aa)).

It belongs to the NAD-dependent DNA ligase family. LigA subfamily. Mg(2+) serves as cofactor. It depends on Mn(2+) as a cofactor.

The enzyme catalyses NAD(+) + (deoxyribonucleotide)n-3'-hydroxyl + 5'-phospho-(deoxyribonucleotide)m = (deoxyribonucleotide)n+m + AMP + beta-nicotinamide D-nucleotide.. Functionally, DNA ligase that catalyzes the formation of phosphodiester linkages between 5'-phosphoryl and 3'-hydroxyl groups in double-stranded DNA using NAD as a coenzyme and as the energy source for the reaction. It is essential for DNA replication and repair of damaged DNA. The protein is DNA ligase of Bartonella bacilliformis (strain ATCC 35685 / KC583 / Herrer 020/F12,63).